A 182-amino-acid chain; its full sequence is Large ribosomal subunit protein bL19m (182 aa).

The N-terminal 21 residues, 1–21 (MFNAKHFFNLGLGFQWLQKRG), are a transit peptide targeting the mitochondrion.

This sequence belongs to the bacterial ribosomal protein bL19 family. As to quaternary structure, component of the mitochondrial large ribosomal subunit (mt-LSU). Mature yeast 74S mitochondrial ribosomes consist of a small (37S) and a large (54S) subunit. The 37S small subunit contains a 15S ribosomal RNA (15S mt-rRNA) and at least 32 different proteins. The 54S large subunit contains a 21S rRNA (21S mt-rRNA) and at least 45 different proteins.

The protein resides in the mitochondrion. Functionally, component of the mitochondrial ribosome (mitoribosome), a dedicated translation machinery responsible for the synthesis of mitochondrial genome-encoded proteins, including at least some of the essential transmembrane subunits of the mitochondrial respiratory chain. The mitoribosomes are attached to the mitochondrial inner membrane and translation products are cotranslationally integrated into the membrane. bL19m is essential for respiration. The chain is Large ribosomal subunit protein bL19m (img1) from Schizosaccharomyces pombe (strain 972 / ATCC 24843) (Fission yeast).